We begin with the raw amino-acid sequence, 318 residues long: Ribosomal RNA small subunit methyltransferase H (318 aa).

S-adenosyl-L-methionine is bound by residues 37 to 39, aspartate 57, phenylalanine 83, aspartate 104, and glutamine 111; that span reads GGH.

The protein belongs to the methyltransferase superfamily. RsmH family.

It localises to the cytoplasm. It catalyses the reaction cytidine(1402) in 16S rRNA + S-adenosyl-L-methionine = N(4)-methylcytidine(1402) in 16S rRNA + S-adenosyl-L-homocysteine + H(+). Specifically methylates the N4 position of cytidine in position 1402 (C1402) of 16S rRNA. This is Ribosomal RNA small subunit methyltransferase H from Neisseria gonorrhoeae (strain NCCP11945).